The following is a 739-amino-acid chain: Nucleoprotein (739 aa).

Positions 334–363 (VNVGEQYQQLREAATEAEKQLQQYAESREL) form a coiled coil. The tract at residues 415–646 (PKTSGHYDDD…QDSDNTQPEH (232 aa)) is disordered. 2 stretches are compositionally biased toward low complexity: residues 449-458 (SQDTTIPDVV) and 504-514 (KGGQQKNSQKG). Over residues 520-530 (RQTQSRPTQNV) the composition is skewed to polar residues. A compositionally biased stretch (acidic residues) spans 567–579 (EEADPLDDADDET). The span at 611 to 638 (YRDHSEKRELPQDEQQDQDHTQEARNQD) shows a compositional bias: basic and acidic residues.

This sequence belongs to the filoviruses nucleoprotein family. Homooligomer. Homomultimerizes to form the nucleocapsid. Binds to viral genomic RNA. Interacts with VP35 and VP30 to form the nucleocapsid. Interacts with host PPP2R5C; this interaction leads to VP30 dephosphorylation and viral transcription. Interacts with VP24; this interaction facilitates nucleocapsid assembly and genome packaging. Interacts with matrix protein VP40; this interaction allows recruitment of the nucleocapsid into progeny virions. Interacts with host STAU1. Interacts with host NXF1 (via RNA-binding domain); this interaction recruits NXF1 to the inclusion bodies were viral replication takes place, probably to export viral mRNA-NXF1 complexes from these sites. Interacts with host CCDC92; this interaction sequesters NP in the host cytoplasm. Interacts with host TRIM14. Phosphorylated and O-glycosylated by host. Acetylated by host EP300 in vitro.

It localises to the virion. It is found in the host cytoplasm. Functionally, oligomerizes into helical capsid to encapsidate the viral genome, protecting it from nucleases and the cellular innate immune response. VP35 binds to and stabilizes monomeric NP, keeping it soluble. Upon virus replication, NP is recruited to bind cooperatively viral genomic RNA and VP35 is released. The encapsidated genomic RNA is termed the nucleocapsid and serves as template for transcription and replication. The nucleocapsid is helical with a pitch of 10.81 NP per turn and a diameter of about 22nm. Each NP binds to six nucleotides of viral genomic RNA, three being exposed to the solvant and three hidden into the nucleocapsid. Also recruits host PPP2R5C phosphatase to dephosphorylate VP30 and thereby promote viral transcription. Upon virion assembly and budding, NP binds to VP24 and possibly host STAU1. The chain is Nucleoprotein (NP) from Epomops franqueti (Franquet's epauletted fruit bat).